The following is a 98-amino-acid chain: MSVRGKAGKGLGKGGAKCHRKVLSDNIQGITKCTIRRLARHGGVKRILGLIYEETRRVFKVFLENVIWYAVTNTEHAKRKTVTAMAVVYVLKRQGRTL.

The DNA-binding element occupies 17–21; sequence KCHRK.

The protein belongs to the histone H4 family. The nucleosome is a histone octamer containing two molecules each of H2A, H2B, H3 and H4 assembled in one H3-H4 heterotetramer and two H2A-H2B heterodimers. The octamer wraps approximately 147 bp of DNA.

The protein localises to the nucleus. Its subcellular location is the chromosome. Functionally, core component of nucleosome. Nucleosomes wrap and compact DNA into chromatin, limiting DNA accessibility to the cellular machineries which require DNA as a template. Histones thereby play a central role in transcription regulation, DNA repair, DNA replication and chromosomal stability. DNA accessibility is regulated via a complex set of post-translational modifications of histones, also called histone code, and nucleosome remodeling. This is Histone H4-like protein type G from Homo sapiens (Human).